The primary structure comprises 218 residues: Zinc finger BED domain-containing protein 2 (218 aa).

Acidic residues predominate over residues 1–11 (MMRREDEEEEG). The disordered stretch occupies residues 1–24 (MMRREDEEEEGTMMKAKGDLEMKE). The BED-type zinc-finger motif lies at 52 to 113 (TRFSEAWEYF…SMHREELEKS (62 aa)). Positions 78, 81, 101, and 106 each coordinate Zn(2+). Residues 104–137 (SMHREELEKSGHGQAGQRQDPRPHGPQLPTGIEG) form a disordered region. Residues 105–114 (MHREELEKSG) show a composition bias toward basic and acidic residues.

Expressed in keratinocytes.

Its subcellular location is the nucleus. Functionally, transcriptional regulator which has intrinsic repressor activity and which competes with the transcriptional activator IRF1 for binding to the 5'-[CA]GAA[AC]C[CT]-3' consensus sequence in gene promoters. May thereby play a role in keratinocyte differentiation. The protein is Zinc finger BED domain-containing protein 2 (ZBED2) of Homo sapiens (Human).